A 127-amino-acid polypeptide reads, in one-letter code: Small ribosomal subunit protein eS8 (127 aa).

Positions 1–25 (MTIFQGKSGKKPTGGNLKQAKKKRR) are disordered.

The protein belongs to the eukaryotic ribosomal protein eS8 family. As to quaternary structure, part of the 30S ribosomal subunit.

The polypeptide is Small ribosomal subunit protein eS8 (Thermoplasma volcanium (strain ATCC 51530 / DSM 4299 / JCM 9571 / NBRC 15438 / GSS1)).